The following is a 206-amino-acid chain: MMQESVLAQLDVSRETSEKLSHFVALVEKWNKAVNLIGRSTVDSIWTRHVLDSAQLRTHLTSQPRLWLDLGSGSGFPGIVVAIMAADESPESRFVLVESDQRKATFLRTACRELKLSAAVLAARIESLPPQKADVISARALAALPDLCALAAPHLAPNGICLFPKGVGHISEIAAARQSWNMEMETLPSLTDPDAVILKLKALAHV.

S-adenosyl-L-methionine contacts are provided by residues Gly71, Phe76, 125–126, and Arg139; that span reads IE.

The protein belongs to the methyltransferase superfamily. RNA methyltransferase RsmG family.

It localises to the cytoplasm. The enzyme catalyses guanosine(527) in 16S rRNA + S-adenosyl-L-methionine = N(7)-methylguanosine(527) in 16S rRNA + S-adenosyl-L-homocysteine. Functionally, specifically methylates the N7 position of guanine in position 527 of 16S rRNA. This Cereibacter sphaeroides (strain ATCC 17029 / ATH 2.4.9) (Rhodobacter sphaeroides) protein is Ribosomal RNA small subunit methyltransferase G.